A 420-amino-acid chain; its full sequence is Pre-mRNA-splicing factor RBM22 (420 aa).

A2 carries the N-acetylalanine modification. Phosphoserine occurs at positions 4 and 102. Glycyl lysine isopeptide (Lys-Gly) (interchain with G-Cter in SUMO2) cross-links involve residues K139 and K149. The C3H1-type zinc finger occupies 159–186 (RNRPHICSFWVKGECKRGEECPYRHEKP). An N6-acetyllysine modification is found at K212. One can recognise an RRM domain in the interval 232–305 (TTLYVGGLGD…RRLNVKWGRS (74 aa)). A Glycyl lysine isopeptide (Lys-Gly) (interchain with G-Cter in SUMO2) cross-link involves residue K290. 2 disordered regions span residues 303-343 (GRSQ…AAEE) and 372-420 (APPP…HSSP). A compositionally biased stretch (basic and acidic residues) spans 309-318 (RGKEKEKDGT).

It belongs to the SLT11 family. Component of the pre-catalytic and catalytic spliceosome complexes. Component of the postcatalytic spliceosome P complex. Interacts with PDCD6; the interaction induces translocation of PDCD6 in the cytoplasm. Interacts with PPIL1.

The protein localises to the nucleus. Its subcellular location is the cytoplasm. Its function is as follows. Required for pre-mRNA splicing as component of the activated spliceosome. Involved in the first step of pre-mRNA splicing. Binds directly to the internal stem-loop (ISL) domain of the U6 snRNA and to the pre-mRNA intron near the 5' splice site during the activation and catalytic phases of the spliceosome cycle. Involved in both translocations of the nuclear SLU7 to the cytoplasm and the cytosolic calcium-binding protein PDCD6 to the nucleus upon cellular stress responses. The sequence is that of Pre-mRNA-splicing factor RBM22 (RBM22) from Bos taurus (Bovine).